A 55-amino-acid chain; its full sequence is Large ribosomal subunit protein bL33 (55 aa).

The protein belongs to the bacterial ribosomal protein bL33 family.

The protein is Large ribosomal subunit protein bL33 of Sinorhizobium fredii (strain NBRC 101917 / NGR234).